The sequence spans 898 residues: Alanine--tRNA ligase (898 aa).

Zn(2+)-binding residues include His-564, His-568, Cys-682, and His-686.

This sequence belongs to the class-II aminoacyl-tRNA synthetase family. Zn(2+) is required as a cofactor.

The protein resides in the cytoplasm. The enzyme catalyses tRNA(Ala) + L-alanine + ATP = L-alanyl-tRNA(Ala) + AMP + diphosphate. Catalyzes the attachment of alanine to tRNA(Ala) in a two-step reaction: alanine is first activated by ATP to form Ala-AMP and then transferred to the acceptor end of tRNA(Ala). Also edits incorrectly charged Ser-tRNA(Ala) and Gly-tRNA(Ala) via its editing domain. The sequence is that of Alanine--tRNA ligase from Beijerinckia indica subsp. indica (strain ATCC 9039 / DSM 1715 / NCIMB 8712).